The sequence spans 336 residues: Glycerol-3-phosphate dehydrogenase [NAD(P)+] (336 aa).

NADPH-binding residues include serine 11, tryptophan 12, arginine 32, and lysine 109. Sn-glycerol 3-phosphate is bound by residues lysine 109, glycine 140, and serine 142. Alanine 144 is an NADPH binding site. 5 residues coordinate sn-glycerol 3-phosphate: lysine 195, aspartate 248, serine 258, arginine 259, and asparagine 260. Lysine 195 acts as the Proton acceptor in catalysis. An NADPH-binding site is contributed by arginine 259. Valine 283 and glutamate 285 together coordinate NADPH.

Belongs to the NAD-dependent glycerol-3-phosphate dehydrogenase family.

The protein localises to the cytoplasm. It catalyses the reaction sn-glycerol 3-phosphate + NAD(+) = dihydroxyacetone phosphate + NADH + H(+). The catalysed reaction is sn-glycerol 3-phosphate + NADP(+) = dihydroxyacetone phosphate + NADPH + H(+). It functions in the pathway membrane lipid metabolism; glycerophospholipid metabolism. In terms of biological role, catalyzes the reduction of the glycolytic intermediate dihydroxyacetone phosphate (DHAP) to sn-glycerol 3-phosphate (G3P), the key precursor for phospholipid synthesis. This is Glycerol-3-phosphate dehydrogenase [NAD(P)+] from Leuconostoc mesenteroides subsp. mesenteroides (strain ATCC 8293 / DSM 20343 / BCRC 11652 / CCM 1803 / JCM 6124 / NCDO 523 / NBRC 100496 / NCIMB 8023 / NCTC 12954 / NRRL B-1118 / 37Y).